Here is a 189-residue protein sequence, read N- to C-terminus: GMP synthase [glutamine-hydrolyzing] subunit A (189 aa).

The Glutamine amidotransferase type-1 domain maps to 5–189 (KILVVNNYGQ…MNFFEVCDLY (185 aa)). The Nucleophile role is filled by cysteine 79. Catalysis depends on residues histidine 166 and glutamate 168.

As to quaternary structure, heterodimer composed of a glutamine amidotransferase subunit (A) and a GMP-binding subunit (B).

The enzyme catalyses XMP + L-glutamine + ATP + H2O = GMP + L-glutamate + AMP + diphosphate + 2 H(+). Its pathway is purine metabolism; GMP biosynthesis; GMP from XMP (L-Gln route): step 1/1. Functionally, catalyzes the synthesis of GMP from XMP. This chain is GMP synthase [glutamine-hydrolyzing] subunit A, found in Methanosarcina mazei (strain ATCC BAA-159 / DSM 3647 / Goe1 / Go1 / JCM 11833 / OCM 88) (Methanosarcina frisia).